The primary structure comprises 189 residues: uncharacterized protein (189 aa).

Positions 1 to 19 are cleaved as a signal peptide; it reads MKRVLFFLLMIFVSFGVIA.

This is an uncharacterized protein from Escherichia coli (strain K12).